A 211-amino-acid chain; its full sequence is Ribonuclease HII (211 aa).

Positions 11–200 (EFIAGVDEVG…VKKLLSTLLS (190 aa)) constitute an RNase H type-2 domain. Residues D17, E18, and D109 each coordinate a divalent metal cation.

This sequence belongs to the RNase HII family. Requires Mn(2+) as cofactor. Mg(2+) is required as a cofactor.

It is found in the cytoplasm. It carries out the reaction Endonucleolytic cleavage to 5'-phosphomonoester.. In terms of biological role, endonuclease that specifically degrades the RNA of RNA-DNA hybrids. This is Ribonuclease HII from Histophilus somni (strain 2336) (Haemophilus somnus).